Reading from the N-terminus, the 113-residue chain is Prostate and testis expressed protein 2 (113 aa).

The signal sequence occupies residues 1–26; that stretch reads MLVLFLLGTVFLLCPYWGELHDPIKA. Positions 29-110 constitute a UPAR/Ly6 domain; sequence IMCYECKKYH…CDHSNYCNLP (82 aa). Intrachain disulfides connect Cys31/Cys57, Cys34/Cys42, Cys49/Cys80, and Cys84/Cys101.

Belongs to the PATE family. Isoform 1 and isoform 2 are expressed in prostate and testis. Isoform 2 is expressed in male and female brain at equivalent levels, in particular in cerebellum, cerebral cortex, corpus callosum, occipital, parrietal and temporal lobes, and pons, but not in amygdala, cerebral peduncle, hippocampus and thalamus.

It localises to the secreted. In Homo sapiens (Human), this protein is Prostate and testis expressed protein 2 (PATE2).